An 892-amino-acid polypeptide reads, in one-letter code: DNA mismatch repair protein MutS (892 aa).

607–614 (GPNMSGKS) is a binding site for ATP.

The protein belongs to the DNA mismatch repair MutS family.

Its function is as follows. This protein is involved in the repair of mismatches in DNA. It is possible that it carries out the mismatch recognition step. This protein has a weak ATPase activity. This is DNA mismatch repair protein MutS from Bacillus cereus (strain AH820).